Reading from the N-terminus, the 311-residue chain is tRNA dimethylallyltransferase (311 aa).

ATP is bound at residue 16–23 (GATASGKS). Residue 18-23 (TASGKS) participates in substrate binding. 2 interaction with substrate tRNA regions span residues 41–44 (DSRQ) and 165–169 (QRLIR).

The protein belongs to the IPP transferase family. As to quaternary structure, monomer. Mg(2+) serves as cofactor.

It carries out the reaction adenosine(37) in tRNA + dimethylallyl diphosphate = N(6)-dimethylallyladenosine(37) in tRNA + diphosphate. Catalyzes the transfer of a dimethylallyl group onto the adenine at position 37 in tRNAs that read codons beginning with uridine, leading to the formation of N6-(dimethylallyl)adenosine (i(6)A). The polypeptide is tRNA dimethylallyltransferase (Chlorobium chlorochromatii (strain CaD3)).